A 157-amino-acid polypeptide reads, in one-letter code: MARVKRAVNAHKKRRVILERAKGYRGQRSRLYRKAKEQLLHSFVYSYGDRKKKKGDFRRLWIQRINAASRANGLTYNRLIQGLKAAEVEVDRRMLAELAVSDANAFAALVQVAKDSLPADTSAPAVSAEAAPKAKAAKKPAAKKAAAKKPVAEEAAK.

The disordered stretch occupies residues threonine 121–lysine 157. Residues serine 122 to alanine 134 show a composition bias toward low complexity. Residues lysine 135–alanine 147 show a composition bias toward basic residues.

This sequence belongs to the bacterial ribosomal protein bL20 family.

Binds directly to 23S ribosomal RNA and is necessary for the in vitro assembly process of the 50S ribosomal subunit. It is not involved in the protein synthesizing functions of that subunit. The sequence is that of Large ribosomal subunit protein bL20 (rplT) from Arthrobacter sp. (strain FB24).